The following is a 427-amino-acid chain: Trigger factor (427 aa).

One can recognise a PPIase FKBP-type domain in the interval 163-248 (GDTVVIDFVG…IHEVKEKEVP (86 aa)).

It belongs to the FKBP-type PPIase family. Tig subfamily.

The protein localises to the cytoplasm. It carries out the reaction [protein]-peptidylproline (omega=180) = [protein]-peptidylproline (omega=0). Functionally, involved in protein export. Acts as a chaperone by maintaining the newly synthesized protein in an open conformation. Functions as a peptidyl-prolyl cis-trans isomerase. In Streptococcus gordonii (strain Challis / ATCC 35105 / BCRC 15272 / CH1 / DL1 / V288), this protein is Trigger factor.